A 292-amino-acid chain; its full sequence is Ribosomal protein L11 methyltransferase (292 aa).

Residues Thr-136, Gly-159, Asp-181, and Asn-228 each contribute to the S-adenosyl-L-methionine site.

It belongs to the methyltransferase superfamily. PrmA family.

Its subcellular location is the cytoplasm. The catalysed reaction is L-lysyl-[protein] + 3 S-adenosyl-L-methionine = N(6),N(6),N(6)-trimethyl-L-lysyl-[protein] + 3 S-adenosyl-L-homocysteine + 3 H(+). In terms of biological role, methylates ribosomal protein L11. This is Ribosomal protein L11 methyltransferase from Agrobacterium fabrum (strain C58 / ATCC 33970) (Agrobacterium tumefaciens (strain C58)).